Reading from the N-terminus, the 210-residue chain is Silenced mating-type protein ALPHA2 (210 aa).

The residue at position 1 (Met-1) is an N-acetylmethionine. An N-terminal domain region spans residues 1-102 (MNKIPIKDLL…RSIENDRSNY (102 aa)). The interval 103-128 (QLTQKNKSADGLVFNVVTQDMINKST) is flexible linker. Residues 129–191 (KPYRGHRFTK…NRRRKEKTIT (63 aa)) constitute a DNA-binding region (homeobox; TALE-type). The C-terminal tail stretch occupies residues 190–210 (ITIAPELADLLSGEPLAKKKE).

The protein belongs to the TALE/M-ATYP homeobox family.

It is found in the nucleus. Mating type proteins are sequence specific DNA-binding proteins that act as master switches in yeast differentiation by controlling gene expression in a cell type-specific fashion. Silenced copy of ALPHA2 at HML. This Saccharomyces cerevisiae (strain ATCC 204508 / S288c) (Baker's yeast) protein is Silenced mating-type protein ALPHA2 (HMLALPHA2).